The primary structure comprises 664 residues: Chaperone protein DnaK (664 aa).

Threonine 201 is modified (phosphothreonine; by autocatalysis). Residues 574–592 (LKEDASTEKIKEASEELSR) show a composition bias toward basic and acidic residues. Residues 574–664 (LKEDASTEKI…DVEIVDKPND (91 aa)) are disordered. Low complexity predominate over residues 600–617 (AMQSQSASAAPSSAANAQ). Positions 639–649 (GNSTSASSNNE) are enriched in polar residues.

Belongs to the heat shock protein 70 family.

Acts as a chaperone. This Chlamydia felis (strain Fe/C-56) (Chlamydophila felis) protein is Chaperone protein DnaK.